The primary structure comprises 480 residues: Cysteine--tRNA ligase (480 aa).

Residue cysteine 27 participates in Zn(2+) binding. Residues 29–39 (PTVYNYAHIGN) carry the 'HIGH' region motif. Cysteine 221, histidine 246, and glutamate 250 together coordinate Zn(2+). The 'KMSKS' region signature appears at 278–282 (KMSKS). Lysine 281 contributes to the ATP binding site.

It belongs to the class-I aminoacyl-tRNA synthetase family. As to quaternary structure, monomer. It depends on Zn(2+) as a cofactor.

The protein resides in the cytoplasm. It catalyses the reaction tRNA(Cys) + L-cysteine + ATP = L-cysteinyl-tRNA(Cys) + AMP + diphosphate. The sequence is that of Cysteine--tRNA ligase from Borreliella afzelii (strain PKo) (Borrelia afzelii).